A 201-amino-acid polypeptide reads, in one-letter code: Dephospho-CoA kinase (201 aa).

The DPCK domain occupies 4 to 201; the sequence is SVGLTGNIAS…KYLREAKIKQ (198 aa). An ATP-binding site is contributed by 12–17; it reads ASGKST.

This sequence belongs to the CoaE family.

It localises to the cytoplasm. The enzyme catalyses 3'-dephospho-CoA + ATP = ADP + CoA + H(+). The protein operates within cofactor biosynthesis; coenzyme A biosynthesis; CoA from (R)-pantothenate: step 5/5. Its function is as follows. Catalyzes the phosphorylation of the 3'-hydroxyl group of dephosphocoenzyme A to form coenzyme A. In Legionella pneumophila (strain Lens), this protein is Dephospho-CoA kinase.